The following is a 433-amino-acid chain: Probable carboxypeptidase ATEG_02905 (433 aa).

Residues 1-18 (MKSAISLLLASAATYVGA) form the signal peptide. The segment at 20 to 40 (PHPEPPQLVLSPSTSTGVHGD) is disordered. Asn-92 is a glycosylation site (N-linked (GlcNAc...) asparagine). Asp-161 is a binding site for Zn(2+). Glu-193 acts as the Proton acceptor in catalysis. Glu-194 contacts Zn(2+).

It belongs to the peptidase M20A family. It depends on Zn(2+) as a cofactor.

It is found in the secreted. The polypeptide is Probable carboxypeptidase ATEG_02905 (Aspergillus terreus (strain NIH 2624 / FGSC A1156)).